The sequence spans 504 residues: MDTSVLNPELQIHGFIGVDSLQSSRKRKNDFDDFPLNKGLKTNNNDYSGSIEPKFSPALSIKEDGKNDRNFEALMSLQAQDSNLSEQNTSIHLDALASSSIALGNDNVDSSAFLSKVNKGVNAMRNSTSNQTNDSILISPSEITNMDPFLKGSARWTAEHWDYLERRMQNFCQTYSLDHTQVADSLHEKRLHGPLSSLVKLLVQEMPSFTRRTILRHLRALYNIPGYEKYSRKNSSGRGDFGVQETAIISQEVHNFIMDQGWSEYQFCNQIWAGKCPKTIRMFYSNLYKKLSHRDAKSIYHHVRRAYNPFEDRCVWSKEEDEELRKNVVEHGKCWTKIGRKMARMPNDCRDRWRDVVRFGDKLKRNAWSLEEETQLLQIVAELRNREDLSSDINWTLVAQMLGTRTRLQCRYKFQQLTKAASKFELQENVWLLERIYDSLLNNGGKIHWENIVKEANGRWTRDQMLFQFINLKKMIPSYDNLPLLEATKSAIDDFKVVLSGFSN.

Residues 30 to 51 (DFDDFPLNKGLKTNNNDYSGSI) are disordered. HTH myb-type domains lie at 308 to 361 (NPFE…RFGD) and 362 to 422 (KLKR…KAAS). 2 consecutive DNA-binding regions (H-T-H motif) follow at residues 335–357 (WTKI…RDVV) and 395–418 (WTLV…QQLT).

The protein resides in the nucleus. DNA-binding protein that recognizes sites within both the enhancer and the promoter of rRNA transcription, as well as upstream of many genes transcribed by RNA polymerase II. Has a role in the termination of RNA polymerase I catalyzed transcription. This Schizosaccharomyces pombe (strain 972 / ATCC 24843) (Fission yeast) protein is DNA-binding protein reb1 (reb1).